Consider the following 186-residue polypeptide: Large ribosomal subunit protein bL12c (186 aa).

Residues 1 to 11 (MASTLSTITLR) are compositionally biased toward polar residues. Disordered stretches follow at residues 1-23 (MAST…STHA) and 162-186 (EGVS…VSIA). A chloroplast-targeting transit peptide spans 1–53 (MASTLSTITLRSPSPSTASSTHASIPFPKKALEFPIRTPKLHHRRATFLRPLA). The segment covering 12–23 (SPSPSTASSTHA) has biased composition (low complexity). The span at 162–180 (EGVSKDEAEDAKKQLEEAG) shows a compositional bias: basic and acidic residues.

Belongs to the bacterial ribosomal protein bL12 family.

It is found in the plastid. Its subcellular location is the chloroplast. This is Large ribosomal subunit protein bL12c (RPL12) from Nicotiana tabacum (Common tobacco).